We begin with the raw amino-acid sequence, 92 residues long: Putative transmembrane protein ORF92 (92 aa).

A run of 3 helical transmembrane segments spans residues 11 to 28 (FVKG…TYAI), 32 to 52 (FFSS…LFAS), and 54 to 74 (FLFD…IGVG).

The protein localises to the host membrane. The chain is Putative transmembrane protein ORF92 from Acidianus convivator (ABV).